The following is a 117-amino-acid chain: Pancreatic progenitor cell differentiation and proliferation factor A (117 aa).

A disordered region spans residues 22 to 46 (GSTSSNSSCSSSEYTGEVIPHPPGL). Low complexity predominate over residues 23–33 (STSSNSSCSSS).

The protein belongs to the PPDPF family. Expressed exclusively in the exocrine cells during pancreas development.

Probable regulator of exocrine pancreas development. The polypeptide is Pancreatic progenitor cell differentiation and proliferation factor A (ppdpfa) (Danio rerio (Zebrafish)).